The primary structure comprises 92 residues: CRISPR-associated endoribonuclease Cas2 3 (92 aa).

Position 9 (D9) interacts with Mg(2+).

Belongs to the CRISPR-associated endoribonuclease Cas2 protein family. Homodimer, forms a heterotetramer with a Cas1 homodimer. The cofactor is Mg(2+).

Its function is as follows. CRISPR (clustered regularly interspaced short palindromic repeat), is an adaptive immune system that provides protection against mobile genetic elements (viruses, transposable elements and conjugative plasmids). CRISPR clusters contain sequences complementary to antecedent mobile elements and target invading nucleic acids. CRISPR clusters are transcribed and processed into CRISPR RNA (crRNA). Functions as a ssRNA-specific endoribonuclease. Involved in the integration of spacer DNA into the CRISPR cassette. This chain is CRISPR-associated endoribonuclease Cas2 3, found in Synechocystis sp. (strain ATCC 27184 / PCC 6803 / Kazusa).